The sequence spans 267 residues: Cell division protein FtsQ (267 aa).

Residues 1 to 32 are Cytoplasmic-facing; sequence MRQKTISNKNKQTKNTNNISLRRKLGLMYKKA. The chain crosses the membrane as a helical span at residues 33-53; that stretch reads ILVLKIVLMIFVCLFVFTKYF. The Periplasmic portion of the chain corresponds to 54–267; sequence TSIKTYLITN…DRNKYYIQKY (214 aa). In terms of domain architecture, POTRA spans 73 to 141; the sequence is FRLENVIIEG…NTVYIKLFER (69 aa).

It belongs to the FtsQ/DivIB family. FtsQ subfamily.

The protein resides in the cell inner membrane. Functionally, essential cell division protein. This chain is Cell division protein FtsQ, found in Rickettsia prowazekii (strain Madrid E).